The primary structure comprises 752 residues: Kaurene synthase like 2, chloroplastic (752 aa).

Residues Met-1–Asp-28 constitute a chloroplast transit peptide. Mg(2+) contacts are provided by Asp-538, Asp-542, Asn-682, and Glu-690. The DDXXD motif motif lies at Asp-538–Asp-542.

Belongs to the terpene synthase family. The cofactor is Mg(2+). Highly expressed in leaves.

It is found in the plastid. The protein resides in the chloroplast. It functions in the pathway secondary metabolite biosynthesis; terpenoid biosynthesis. Functionally, involved in the biosynthesis of ent-kaurene diterpenoids natural products such as oridonin, miltiradiene, eriocalyxin B and nezukol, known to exhibit antitumor, anti-inflammatory and antibacterial activities. Catalyzes the conversion of ent-copalyl diphosphate (ent-CPP) to ent-isopimaradiene like compounds. The polypeptide is Kaurene synthase like 2, chloroplastic (Isodon rubescens (Rabdosia rubescens)).